The following is a 352-amino-acid chain: Potassium/proton antiporter CemA (352 aa).

The next 3 membrane-spanning stretches (helical) occupy residues 52 to 72 (VLVSLQCLLTLIIIPLFIHFF), 227 to 247 (IAALTNLFADLLTLFSLIILF), and 312 to 332 (IILLFVATFPVLLDSVIKYWI).

It belongs to the CemA family.

The protein localises to the plastid. It is found in the chloroplast inner membrane. It carries out the reaction K(+)(in) + H(+)(out) = K(+)(out) + H(+)(in). Contributes to K(+)/H(+) antiport activity by supporting proton efflux to control proton extrusion and homeostasis in chloroplasts in a light-dependent manner to modulate photosynthesis. Prevents excessive induction of non-photochemical quenching (NPQ) under continuous-light conditions. Indirectly promotes efficient inorganic carbon uptake into chloroplasts. This Oltmannsiellopsis viridis (Marine flagellate) protein is Potassium/proton antiporter CemA.